Consider the following 483-residue polypeptide: Septin-8 (483 aa).

Basic and acidic residues predominate over residues 1–16 (MAATDLERFSNAEPEP). The interval 1 to 22 (MAATDLERFSNAEPEPRSLSLG) is disordered. Alanine 2 is modified (N-acetylalanine). Residue serine 10 is modified to Phosphoserine. The 267-residue stretch at 41–307 (QGFSFNILCV…ELYRRCKLEE (267 aa)) folds into the Septin-type G domain. A G1 motif region spans residues 51–58 (GETGIGKS). GTP is bound by residues 51–58 (GETGIGKS), glycine 106, 187–195 (KADTISKSE), glycine 241, and arginine 256. The segment at 103–106 (DAVG) is G3 motif. The segment at 186–189 (AKAD) is G4 motif. A coiled-coil region spans residues 320 to 413 (FSLQETYEAK…AVEALQSQAL (94 aa)). Over residues 411-420 (QALHATSQQP) the composition is skewed to polar residues. A disordered region spans residues 411-443 (QALHATSQQPLRKDKDKKNRSDIGAHQPGMSLS). The span at 421–433 (LRKDKDKKNRSDI) shows a compositional bias: basic and acidic residues.

This sequence belongs to the TRAFAC class TrmE-Era-EngA-EngB-Septin-like GTPase superfamily. Septin GTPase family. In terms of assembly, septins polymerize into heterooligomeric protein complexes that form filaments, and can associate with cellular membranes, actin filaments and microtubules. GTPase activity is required for filament formation. Interacts with CDK14. Interacts with SEPTIN5. Interacts with SEPTIN7. Interacts with SEPTIN4. Interacts with VAMP2; the interaction inhibits interaction of VAMP2 with SYP. Interacts with STX1A. Widely expressed, including in brain, heart and platelets; most abundant in aorta. Isoform 2 is expressed at low levels in specific brain areas, such as occipital pole, frontal lobe, temporal lobe and putamen. Isoform 1 and 3 are highly expressed in specific brain areas, such as occipital pole, frontal lobe, temporal lobe and putamen. Isoform 2 is highly expressed in prostate, testis and ovary. Isoform 1 and isoform 3 are expressed at low levels in prostate, testis and ovary.

The protein resides in the cytoplasm. It localises to the cytoskeleton. The protein localises to the synapse. It is found in the cell projection. Its subcellular location is the axon. The protein resides in the cytoplasmic vesicle. It localises to the secretory vesicle. The protein localises to the synaptic vesicle membrane. It is found in the presynapse. Functionally, filament-forming cytoskeletal GTPase. May play a role in platelet secretion. Seems to participate in the process of SNARE complex formation in synaptic vesicles. Its function is as follows. Stabilizes BACE1 protein levels and promotes the sorting and accumulation of BACE1 to the recycling or endosomal compartments, modulating the beta-amyloidogenic processing of APP. The sequence is that of Septin-8 from Homo sapiens (Human).